The following is a 293-amino-acid chain: Nucleotide-binding protein BcerKBAB4_4948 (293 aa).

Gly14–Thr21 provides a ligand contact to ATP. Asp65–Gly68 is a GTP binding site.

The protein belongs to the RapZ-like family.

Functionally, displays ATPase and GTPase activities. This chain is Nucleotide-binding protein BcerKBAB4_4948, found in Bacillus mycoides (strain KBAB4) (Bacillus weihenstephanensis).